We begin with the raw amino-acid sequence, 259 residues long: Dolichol-phosphate mannosyltransferase subunit 1 (259 aa).

A2 bears the N-acetylalanine mark. S3 is modified (phosphoserine). Positions 31, 33, 35, 62, 64, 117, 118, 119, 146, 233, and 239 each coordinate GDP-alpha-D-mannose. Residue D119 participates in Mg(2+) binding. D119 contacts Mn(2+).

Belongs to the glycosyltransferase 2 family. As to quaternary structure, component of the dolichol-phosphate mannose (DPM) synthase complex composed of DPM1, DPM2 and DPM3; within the complex, directly interacts with DPM3. This interaction may stabilize DPM1. Mg(2+) is required as a cofactor. Mn(2+) serves as cofactor. The cofactor is Ca(2+).

It is found in the endoplasmic reticulum. The enzyme catalyses a di-trans,poly-cis-dolichyl phosphate + GDP-alpha-D-mannose = a di-trans,poly-cis-dolichyl beta-D-mannosyl phosphate + GDP. It participates in protein modification; protein glycosylation. Transfers mannose from GDP-mannose to dolichol monophosphate to form dolichol phosphate mannose (Dol-P-Man) which is the mannosyl donor in pathways leading to N-glycosylation, glycosyl phosphatidylinositol membrane anchoring, and O-mannosylation of proteins; catalytic subunit of the dolichol-phosphate mannose (DPM) synthase complex. This Sus scrofa (Pig) protein is Dolichol-phosphate mannosyltransferase subunit 1 (DPM1).